A 435-amino-acid polypeptide reads, in one-letter code: Histidine--tRNA ligase (435 aa).

Belongs to the class-II aminoacyl-tRNA synthetase family. In terms of assembly, homodimer.

The protein resides in the cytoplasm. It carries out the reaction tRNA(His) + L-histidine + ATP = L-histidyl-tRNA(His) + AMP + diphosphate + H(+). This chain is Histidine--tRNA ligase, found in Synechococcus elongatus (strain ATCC 33912 / PCC 7942 / FACHB-805) (Anacystis nidulans R2).